A 356-amino-acid chain; its full sequence is sn-glycerol-3-phosphate import ATP-binding protein UgpC (356 aa).

The ABC transporter domain occupies 4 to 235 (LKLQAVTKSW…PASLFVASFI (232 aa)). 37-44 (GPSGCGKS) is an ATP binding site.

The protein belongs to the ABC transporter superfamily. sn-glycerol-3-phosphate importer (TC 3.A.1.1.3) family. The complex is composed of two ATP-binding proteins (UgpC), two transmembrane proteins (UgpA and UgpE) and a solute-binding protein (UgpB).

The protein localises to the cell inner membrane. It carries out the reaction sn-glycerol 3-phosphate(out) + ATP + H2O = sn-glycerol 3-phosphate(in) + ADP + phosphate + H(+). Its function is as follows. Part of the ABC transporter complex UgpBAEC involved in sn-glycerol-3-phosphate (G3P) import. Responsible for energy coupling to the transport system. The polypeptide is sn-glycerol-3-phosphate import ATP-binding protein UgpC (Escherichia coli (strain UTI89 / UPEC)).